Consider the following 1064-residue polypeptide: Bifunctional cytochrome P450/NADPH--P450 reductase ascE (1064 aa).

Residues 1–484 (MTELIPGPKG…LHGGAKKGSK (484 aa)) form a cytochrome P450 region. Cys-411 provides a ligand contact to heme. Residues 485-1064 (IDGPSSGASL…ANRYVTEIFA (580 aa)) are NADPH-P-450 reductase. The region spanning 504 to 644 (MTILYGSDSG…DFERWQDDQL (141 aa)) is the Flavodoxin-like domain. FMN is bound by residues 510–514 (SDSGT) and 588–620 (VYGCGNKDYTSTFHRIPKLLDAEFERCGAKRIA). The FAD-binding FR-type domain occupies 676-905 (VDADEATVQS…KPALRLFHPP (230 aa)).

In the N-terminal section; belongs to the cytochrome P450 family. The cofactor is FAD. FMN is required as a cofactor. It depends on heme as a cofactor.

The enzyme catalyses ilicicolin A + NADPH + O2 + H(+) = ilicicolin A epoxide + NADP(+) + H2O. It participates in secondary metabolite biosynthesis; terpenoid biosynthesis. Bifunctional cytochrome P450/NADPH--P450 reductase; part of the asc-1 gene cluster that mediates the biosynthesis both ascochlorin and ascofuranone, a strong inhibitor of cyanide-insensitive alternative oxidases and a promising drug candidate against African trypanosomiasis. The first step in the pathway is performed by the non-reducing polyketide synthase ascC that produces orsellinic acid by condensing acetyl-CoA with 3 malonyl-CoA units. Orsellinic acid is then prenylated by the prenyltransferase ascA to yield ilicicolinic acid B. Ilicicolinic acid B is further reduced to ilicicolin B by the reductase ascB. The halogenase ascD then chlorinates ilicicolin B to produce ilicicolin A which is converted to ilicicolin A epoxide by the cytochrome P450 monooxygenase ascE that catalyzes stereoselective epoxidation of the terminal double bond of the prenyl group. Ilicicolin A epoxide is the last common precursor for the biosynthesis of ascofuranone and ascochlorin. The terpene cyclase ascF produces a monocyclic terpene, and the cyclization reaction is proposed to be initiated by protonation of the terminal epoxide of ilicicolin A epoxide to generate a monocyclic tertiarycation, which is followed by a series of hydride and methyl shifts with abstraction of proton, leading to the formation of the (14S,15R,19R)-trimethylcyclohexanone ring structure of ilicicolin C, which is finally reduced to ascochlorin by the dehydrogenase ascG. On the other hand, ilicicolin A epoxide is hydroxylated by the cytochrome P450 monooxygenase ascH, and the resultant product is cyclized by the terpene cyclase ascI to ascofuranol via protonation-initiated epoxide ring opening, which facilitates the 6-endo-tet cyclization to form the tetrahy-drofuran ring. Finally, ascofuranol is oxidized into ascofuranone by ascJ. The sequence is that of Bifunctional cytochrome P450/NADPH--P450 reductase ascE from Acremonium egyptiacum (Oospora egyptiaca).